We begin with the raw amino-acid sequence, 490 residues long: Ketol-acid reductoisomerase (NADP(+)) (490 aa).

The region spanning 17 to 208 is the KARI N-terminal Rossmann domain; that stretch reads LAQCEFMNAD…GGHRAGVLKS (192 aa). NADP(+)-binding positions include 45-48, R68, R76, S78, and 108-110; these read CGAQ and DKQ. H132 is a catalytic residue. G158 contributes to the NADP(+) binding site. 2 KARI C-terminal knotted domains span residues 209-353 and 355-486; these read SFIA…AEQE and FDNG…MSAM. Positions 217, 221, 389, and 393 each coordinate Mg(2+). Position 414 (S414) interacts with substrate.

It belongs to the ketol-acid reductoisomerase family. Mg(2+) is required as a cofactor.

It catalyses the reaction (2R)-2,3-dihydroxy-3-methylbutanoate + NADP(+) = (2S)-2-acetolactate + NADPH + H(+). The catalysed reaction is (2R,3R)-2,3-dihydroxy-3-methylpentanoate + NADP(+) = (S)-2-ethyl-2-hydroxy-3-oxobutanoate + NADPH + H(+). The protein operates within amino-acid biosynthesis; L-isoleucine biosynthesis; L-isoleucine from 2-oxobutanoate: step 2/4. Its pathway is amino-acid biosynthesis; L-valine biosynthesis; L-valine from pyruvate: step 2/4. Involved in the biosynthesis of branched-chain amino acids (BCAA). Catalyzes an alkyl-migration followed by a ketol-acid reduction of (S)-2-acetolactate (S2AL) to yield (R)-2,3-dihydroxy-isovalerate. In the isomerase reaction, S2AL is rearranged via a Mg-dependent methyl migration to produce 3-hydroxy-3-methyl-2-ketobutyrate (HMKB). In the reductase reaction, this 2-ketoacid undergoes a metal-dependent reduction by NADPH to yield (R)-2,3-dihydroxy-isovalerate. This is Ketol-acid reductoisomerase (NADP(+)) from Pseudoalteromonas translucida (strain TAC 125).